A 611-amino-acid chain; its full sequence is Protein KINASE OF THE OUTER CHLOROPLAST MEMBRANE 1 (611 aa).

Topologically, residues 1-555 (MASKIIAGKP…LEDFHWAVRP (555 aa)) are cytoplasmic. One can recognise a Protein kinase domain in the interval 39-306 (LKLRHRIGRG…TDILLVLKSL (268 aa)). Residues 45–53 (IGRGPFGDV) and K74 each bind ATP. Residues 556–572 (LLIAMGLLTAMKLGICV) traverse the membrane as a helical segment. Over 573-611 (RKKIGRSKDGKQRDGSTGQGDCKIPDGKGSDKSKWLVFF) the chain is Chloroplast intermembrane. The tract at residues 579-606 (SKDGKQRDGSTGQGDCKIPDGKGSDKSK) is disordered. Basic and acidic residues predominate over residues 595–606 (KIPDGKGSDKSK).

It belongs to the protein kinase superfamily. Ser/Thr protein kinase family. As to quaternary structure, associates with the TOC complex containing, at least, translocons at the chloroplast envelope (e.g. TOCs and TICs such as TOC159, TOC75, TOC33 and TIC56).

It localises to the plastid. The protein resides in the chloroplast outer membrane. It catalyses the reaction L-seryl-[protein] + ATP = O-phospho-L-seryl-[protein] + ADP + H(+). The enzyme catalyses L-threonyl-[protein] + ATP = O-phospho-L-threonyl-[protein] + ADP + H(+). Its function is as follows. Serine/threonine protein kinase acting as a regulatory component of the plastid protein import machinery by phosphorylating import receptors (e.g. the A-domain of TOC159, TOC120 and TOC132). Supports preprotein import and contributes to efficient chloroplast biogenesis, thus being required for survival during de-etiolation. This is Protein KINASE OF THE OUTER CHLOROPLAST MEMBRANE 1 from Arabidopsis thaliana (Mouse-ear cress).